The sequence spans 239 residues: MQDPNADTEWNDILRKKGILPPKETPVEEEEDEQLHLQSQSVVKTYEDMTLEELEENEDEFSEEDEHAMEMYRLKRLAEWKANQMKNVFGELKEISGQDYVQEVNKAGEGIWVVLHLYKQGIPLCSLINQHLAQLARKFPQSKFLKSISSTCIPNYPDRNLPTLFVYRDGEMKAQFIGPLVFGGMNLTCDELEWRLSESGAVKTDLEENPRKQIQDQLMTSIRCSANTHRDGEEDSDED.

Residues 16 to 37 (KKGILPPKETPVEEEEDEQLHL) are disordered. Residues 28 to 201 (EEEEDEQLHL…LEWRLSESGA (174 aa)) form the Phosducin domain. At Ser41 the chain carries Phosphoserine. The interval 89–239 (FGELKEISGQ…RDGEEDSDED (151 aa)) is thioredoxin fold. Positions 217–227 (QLMTSIRCSAN) are enriched in polar residues. The disordered stretch occupies residues 217 to 239 (QLMTSIRCSANTHRDGEEDSDED).

This sequence belongs to the phosducin family. As to quaternary structure, interacts (via thioredoxin fold region) with kdr/vegfr2 (via juxtamembrane domain). In terms of tissue distribution, expressed in endothelial cells.

It is found in the cytoplasm. It localises to the perinuclear region. Its subcellular location is the endoplasmic reticulum. Acts as a chaperone for the angiogenic VEGF receptor KDR/VEGFR2, increasing its abundance by inhibiting its ubiquitination and degradation. Inhibits the folding activity of the chaperonin-containing T-complex (CCT) which leads to inhibition of cytoskeletal actin folding. Acts as a chaperone during heat shock alongside HSP90 and HSP40/70 chaperone complexes. Modulates the activation of caspases during apoptosis. In Danio rerio (Zebrafish), this protein is Phosducin-like protein 3.